The primary structure comprises 189 residues: Fucolectin-5 (189 aa).

The signal sequence occupies residues 1-31 (MKTCNLTDRMKVKMIMLLFQILAISTLQSDS). The segment at 40 to 189 (QENVAVRGKA…VEVNALLPAN (150 aa)) is F5/8 type C-like. Ca(2+) is bound by residues aspartate 70, asparagine 72, and serine 81. Intrachain disulfides connect cysteine 82-cysteine 178, cysteine 114-cysteine 115, and cysteine 140-cysteine 156. 2 residues coordinate alpha-L-fucose: histidine 84 and arginine 111. The Cell attachment site motif lies at 111 to 113 (RGD). Arginine 118 contributes to the alpha-L-fucose binding site. Residues cysteine 178 and glutamate 179 each coordinate Ca(2+).

It belongs to the fucolectin family. Homotrimer. In terms of tissue distribution, gill mucous cells.

It is found in the secreted. Its function is as follows. Acts as a defensive agent. Recognizes blood group fucosylated oligosaccharides including A, B, H and Lewis B-type antigens. Does not recognize Lewis A antigen and has low affinity for monovalent haptens. This is Fucolectin-5 from Anguilla japonica (Japanese eel).